Here is a 37-residue protein sequence, read N- to C-terminus: Large ribosomal subunit protein bL36 (37 aa).

Belongs to the bacterial ribosomal protein bL36 family.

This Bacillus anthracis (strain A0248) protein is Large ribosomal subunit protein bL36.